The chain runs to 81 residues: Large ribosomal subunit protein bL31B (81 aa).

This sequence belongs to the bacterial ribosomal protein bL31 family. Type B subfamily. Part of the 50S ribosomal subunit.

This chain is Large ribosomal subunit protein bL31B, found in Halalkalibacterium halodurans (strain ATCC BAA-125 / DSM 18197 / FERM 7344 / JCM 9153 / C-125) (Bacillus halodurans).